The sequence spans 185 residues: MNITERTIQVIRNRIRSVPDYPSPGVVFRDITPLMEDGPSLHAAVDALAEATRSLDYDRVISAEARGFVFGTALAYRSRKGLVLARKPGKLPREVISVSYELEYGTDSLEVHADAIPPGTRVLVADDLLATGGTARAMCELVEKSGGSVAGCAFLIELGFLEGRKKLLAGYDVISLINYHDPAAE.

It belongs to the purine/pyrimidine phosphoribosyltransferase family. As to quaternary structure, homodimer.

The protein resides in the cytoplasm. It catalyses the reaction AMP + diphosphate = 5-phospho-alpha-D-ribose 1-diphosphate + adenine. The protein operates within purine metabolism; AMP biosynthesis via salvage pathway; AMP from adenine: step 1/1. Catalyzes a salvage reaction resulting in the formation of AMP, that is energically less costly than de novo synthesis. The sequence is that of Adenine phosphoribosyltransferase from Rubrobacter xylanophilus (strain DSM 9941 / JCM 11954 / NBRC 16129 / PRD-1).